The primary structure comprises 428 residues: Aerobic C4-dicarboxylate transport protein (428 aa).

A run of 9 helical transmembrane segments spans residues 5-27 (LFKS…GHYY), 47-64 (MIIA…IAGM), 77-99 (ALLY…VNVV), 141-163 (VIGA…FGFA), 184-206 (VIFG…AMAF), 216-238 (LVQL…VVVL), 289-311 (VVGL…YLTM), 326-348 (IFHQ…GVTG), and 353-375 (VLAA…ILGI).

The protein belongs to the dicarboxylate/amino acid:cation symporter (DAACS) (TC 2.A.23) family.

It localises to the cell inner membrane. Its function is as follows. Responsible for the transport of dicarboxylates such as succinate, fumarate, and malate from the periplasm across the membrane. The sequence is that of Aerobic C4-dicarboxylate transport protein from Salmonella typhi.